A 273-amino-acid chain; its full sequence is Orotidine 5'-phosphate decarboxylase (273 aa).

The Proton donor role is filled by Lys96.

This sequence belongs to the OMP decarboxylase family. Type 2 subfamily.

It carries out the reaction orotidine 5'-phosphate + H(+) = UMP + CO2. It functions in the pathway pyrimidine metabolism; UMP biosynthesis via de novo pathway; UMP from orotate: step 2/2. The polypeptide is Orotidine 5'-phosphate decarboxylase (Nocardioides sp. (strain ATCC BAA-499 / JS614)).